The sequence spans 278 residues: 3-methyl-2-oxobutanoate hydroxymethyltransferase (278 aa).

Asp43 and Asp82 together coordinate Mg(2+). 3-methyl-2-oxobutanoate contacts are provided by residues 43–44 (DS), Asp82, and Lys112. Mg(2+) is bound at residue Glu114. Glu181 functions as the Proton acceptor in the catalytic mechanism.

It belongs to the PanB family. In terms of assembly, homodecamer; pentamer of dimers. Mg(2+) is required as a cofactor.

Its subcellular location is the cytoplasm. The enzyme catalyses 3-methyl-2-oxobutanoate + (6R)-5,10-methylene-5,6,7,8-tetrahydrofolate + H2O = 2-dehydropantoate + (6S)-5,6,7,8-tetrahydrofolate. It functions in the pathway cofactor biosynthesis; (R)-pantothenate biosynthesis; (R)-pantoate from 3-methyl-2-oxobutanoate: step 1/2. In terms of biological role, catalyzes the reversible reaction in which hydroxymethyl group from 5,10-methylenetetrahydrofolate is transferred onto alpha-ketoisovalerate to form ketopantoate. This is 3-methyl-2-oxobutanoate hydroxymethyltransferase from Bacillus cereus (strain AH187).